A 281-amino-acid chain; its full sequence is Pantothenate synthetase (281 aa).

Position 30–37 (30–37 (MGYLHDGH)) interacts with ATP. The active-site Proton donor is the histidine 37. Residue glutamine 61 coordinates (R)-pantoate. Residue glutamine 61 participates in beta-alanine binding. 147–150 (GEKD) provides a ligand contact to ATP. Position 153 (glutamine 153) interacts with (R)-pantoate. Residues isoleucine 176 and 184 to 187 (KSSR) each bind ATP.

This sequence belongs to the pantothenate synthetase family. Homodimer.

Its subcellular location is the cytoplasm. It carries out the reaction (R)-pantoate + beta-alanine + ATP = (R)-pantothenate + AMP + diphosphate + H(+). It participates in cofactor biosynthesis; (R)-pantothenate biosynthesis; (R)-pantothenate from (R)-pantoate and beta-alanine: step 1/1. In terms of biological role, catalyzes the condensation of pantoate with beta-alanine in an ATP-dependent reaction via a pantoyl-adenylate intermediate. This Clostridium acetobutylicum (strain ATCC 824 / DSM 792 / JCM 1419 / IAM 19013 / LMG 5710 / NBRC 13948 / NRRL B-527 / VKM B-1787 / 2291 / W) protein is Pantothenate synthetase.